A 579-amino-acid chain; its full sequence is Threonylcarbamoyladenosine tRNA methylthiotransferase (579 aa).

At Ser-53 the chain carries Phosphoserine. One can recognise an MTTase N-terminal domain in the interval 64–172 (QKIWIRTWGC…VVEVVEETIK (109 aa)). [4Fe-4S] cluster contacts are provided by Cys-73 and Cys-109. Ser-122 bears the Phosphoserine mark. Cys-138, Cys-214, Cys-218, and Cys-221 together coordinate [4Fe-4S] cluster. A Radical SAM core domain is found at 200–431 (RKNPLIEIIS…RVFHSYSPYD (232 aa)). One can recognise a TRAM domain in the interval 431–493 (DHKIGERQQV…KHFMKGQPVS (63 aa)). Phosphothreonine is present on Thr-499. Residues 556 to 578 (CALRMSVGLALLGLLFAFFVKVY) form a helical membrane-spanning segment.

The protein belongs to the methylthiotransferase family. CDKAL1 subfamily. The cofactor is [4Fe-4S] cluster. In terms of tissue distribution, expressed in pancreatic islets.

It is found in the endoplasmic reticulum membrane. It carries out the reaction N(6)-L-threonylcarbamoyladenosine(37) in tRNA + (sulfur carrier)-SH + AH2 + 2 S-adenosyl-L-methionine = 2-methylsulfanyl-N(6)-L-threonylcarbamoyladenosine(37) in tRNA + (sulfur carrier)-H + 5'-deoxyadenosine + L-methionine + A + S-adenosyl-L-homocysteine + 2 H(+). Its function is as follows. Catalyzes the methylthiolation of N6-threonylcarbamoyladenosine (t(6)A), leading to the formation of 2-methylthio-N6-threonylcarbamoyladenosine (ms(2)t(6)A) at position 37 in tRNAs that read codons beginning with adenine. This is Threonylcarbamoyladenosine tRNA methylthiotransferase (CDKAL1) from Homo sapiens (Human).